A 1201-amino-acid polypeptide reads, in one-letter code: DNA-directed RNA polymerase subunit beta' (1201 aa).

Cys60, Cys62, Cys75, and Cys78 together coordinate Zn(2+). Mg(2+) is bound by residues Asp449, Asp451, and Asp453. Zn(2+) contacts are provided by Cys818, Cys892, Cys899, and Cys902.

Belongs to the RNA polymerase beta' chain family. The RNAP catalytic core consists of 2 alpha, 1 beta, 1 beta' and 1 omega subunit. When a sigma factor is associated with the core the holoenzyme is formed, which can initiate transcription. The cofactor is Mg(2+). It depends on Zn(2+) as a cofactor.

It catalyses the reaction RNA(n) + a ribonucleoside 5'-triphosphate = RNA(n+1) + diphosphate. DNA-dependent RNA polymerase catalyzes the transcription of DNA into RNA using the four ribonucleoside triphosphates as substrates. The protein is DNA-directed RNA polymerase subunit beta' of Listeria monocytogenes serotype 4b (strain F2365).